The chain runs to 603 residues: Arginine--tRNA ligase (603 aa).

The short motif at 143–153 is the 'HIGH' region element; that stretch reads PNIAKEMHVGH.

Belongs to the class-I aminoacyl-tRNA synthetase family. As to quaternary structure, monomer.

Its subcellular location is the cytoplasm. It catalyses the reaction tRNA(Arg) + L-arginine + ATP = L-arginyl-tRNA(Arg) + AMP + diphosphate. The protein is Arginine--tRNA ligase of Prochlorococcus marinus (strain MIT 9211).